The sequence spans 591 residues: Aspartate--tRNA(Asp/Asn) ligase (591 aa).

Position 176 (E176) interacts with L-aspartate. Positions 200-203 are aspartate; sequence QLFK. An L-aspartate-binding site is contributed by R222. Residues 222 to 224 and Q231 each bind ATP; that span reads RDE. H450 provides a ligand contact to L-aspartate. E484 is a binding site for ATP. R491 serves as a coordination point for L-aspartate. 536-539 is a binding site for ATP; that stretch reads GLDR.

Belongs to the class-II aminoacyl-tRNA synthetase family. Type 1 subfamily. In terms of assembly, homodimer.

Its subcellular location is the cytoplasm. It catalyses the reaction tRNA(Asx) + L-aspartate + ATP = L-aspartyl-tRNA(Asx) + AMP + diphosphate. Its function is as follows. Aspartyl-tRNA synthetase with relaxed tRNA specificity since it is able to aspartylate not only its cognate tRNA(Asp) but also tRNA(Asn). Reaction proceeds in two steps: L-aspartate is first activated by ATP to form Asp-AMP and then transferred to the acceptor end of tRNA(Asp/Asn). The chain is Aspartate--tRNA(Asp/Asn) ligase from Bacillus anthracis (strain A0248).